Reading from the N-terminus, the 160-residue chain is Transcription elongation factor GreA (160 aa).

It belongs to the GreA/GreB family.

Functionally, necessary for efficient RNA polymerase transcription elongation past template-encoded arresting sites. The arresting sites in DNA have the property of trapping a certain fraction of elongating RNA polymerases that pass through, resulting in locked ternary complexes. Cleavage of the nascent transcript by cleavage factors such as GreA or GreB allows the resumption of elongation from the new 3'terminus. GreA releases sequences of 2 to 3 nucleotides. In Leuconostoc citreum (strain KM20), this protein is Transcription elongation factor GreA.